We begin with the raw amino-acid sequence, 692 residues long: 5-taurinomethyluridine-[tRNA] synthase subunit MTO1, mitochondrial (692 aa).

The N-terminal 25 residues, 1–25 (MFYFRGCGRWVAASFTKLQFPLARL), are a transit peptide targeting the mitochondrion. FAD contacts are provided by residues 43 to 48 (GGGHAG), V155, S218, and Q407. K508 carries the post-translational modification N6-methyllysine.

This sequence belongs to the MnmG family. In terms of assembly, homodimer; forms a dimer in the presence of potassium. Interacts with GTPBP3; forms the GTPBP3-MTO1 complex composed of homodimers of GTPBP3 and MTO1. FAD serves as cofactor.

It is found in the mitochondrion. The catalysed reaction is 5,10-methylenetetrahydrofolate + uridine(34) in tRNA + taurine + GTP + A + H2O = 5-taurinomethyluridine(34) in tRNA + 7,8-dihydrofolate + GDP + AH2 + phosphate + H(+). In terms of biological role, component of the GTPBP3-MTO1 complex that catalyzes the 5-taurinomethyluridine (taum(5)U) modification at the 34th wobble position (U34) of mitochondrial tRNAs (mt-tRNAs), which plays a role in mt-tRNA decoding and mitochondrial translation. Taum(5)U formation on mammalian mt-tRNA requires the presence of both GTPBP3-mediated GTPase activity and MTO1 catalytic activity. In Pongo abelii (Sumatran orangutan), this protein is 5-taurinomethyluridine-[tRNA] synthase subunit MTO1, mitochondrial (MTO1).